Reading from the N-terminus, the 341-residue chain is Ferredoxin--NADP reductase (341 aa).

FAD is bound by residues Asp38, Gln46, Tyr51, Val91, Phe125, Asp292, and Thr333.

This sequence belongs to the ferredoxin--NADP reductase type 2 family. In terms of assembly, homodimer. The cofactor is FAD.

It carries out the reaction 2 reduced [2Fe-2S]-[ferredoxin] + NADP(+) + H(+) = 2 oxidized [2Fe-2S]-[ferredoxin] + NADPH. This is Ferredoxin--NADP reductase from Gluconacetobacter diazotrophicus (strain ATCC 49037 / DSM 5601 / CCUG 37298 / CIP 103539 / LMG 7603 / PAl5).